Reading from the N-terminus, the 505-residue chain is Alkylglycerol monooxygenase (505 aa).

2 helical membrane passes run 56-76 and 104-124; these read VSAW…ISGH and AVAI…ELPW. Residues 130 to 262 enclose the Fatty acid hydroxylase domain; sequence WIFCLFFQDF…FIIWDKMFNT (133 aa). A Histidine box-1 motif is present at residues 145-149; sequence HRAVH. A Histidine box-2 motif is present at residues 158-162; it reads HTIHH. Residues 234–238 carry the Histidine box-3 motif; that stretch reads HRVHH. The next 4 helical transmembrane spans lie at 366 to 386, 396 to 416, 430 to 450, and 452 to 472; these read ILVK…FFHF, LDCT…GAFF, CCGV…AGTH, and LFVI…VLVE.

The protein belongs to the sterol desaturase family. TMEM195 subfamily. It depends on Fe cation as a cofactor.

The protein localises to the endoplasmic reticulum membrane. It carries out the reaction 1-O-(1,2-saturated-alkyl)-sn-glycerol + (6R)-L-erythro-5,6,7,8-tetrahydrobiopterin + O2 = a 1-(1-hydroxyalkyl)-sn-glycerol + (6R)-L-erythro-6,7-dihydrobiopterin + H2O. In terms of biological role, glyceryl-ether monooxygenase that cleaves the O-alkyl bond of ether lipids. The polypeptide is Alkylglycerol monooxygenase (Caenorhabditis elegans).